A 508-amino-acid polypeptide reads, in one-letter code: Cytochrome P450 monooxygenase orf4 (508 aa).

Position 447 (C447) interacts with heme.

The protein belongs to the cytochrome P450 family. It depends on heme as a cofactor.

It functions in the pathway mycotoxin biosynthesis. In terms of biological role, cytochrome P450 monooxygenase; part of the gene cluster that mediates the biosynthesis of brefeldin A (BFA), a protein transport inhibitor that shows antiviral, antifungal, and antitumor properties. The proposed biosynthesis of BFA involves formation of an acyclic polyketide chain that is differentially tailored throughout the backbone. The highly reducing polyketide synthase Bref-PKS is proposed to synthesize the precisely reduced octaketide precursor, which could then be directly offloaded by the thiohydrolase enzyme Bref-TH followed by a cytochrome P450 monooxygenase-mediated formation of the cyclopentane ring and macrocyclization to afford 7-deoxy BFA. Alternatively, the first ring annulation can also occur on the ACP-tethered intermediate before the thiohydrolase release and lactonization. The C7-hydroxylation by another cytochrome P450 monooxygenase is believed to be the final step in the process to obtain the final structure of BFA. In addition to the HRPKS Bref-PKS and the thiohydrolase Bref-TH, the brefeldin A biosynthesis cluster contains 4 cytochrome p450 monooxygenases (called orf3 to orf6), as well a the probable cluster-specific transcription regulator orf8. In Eupenicillium brefeldianum (Penicillium brefeldianum), this protein is Cytochrome P450 monooxygenase orf4.